The chain runs to 305 residues: Plant-type L-asparaginase (305 aa).

The Nucleophile role is filled by T175. Substrate contacts are provided by residues 202–205 (RVGD) and 224–227 (TGLG).

This sequence belongs to the Ntn-hydrolase family. In terms of assembly, heterotetramer of two alpha and two beta chains arranged as a dimer of alpha/beta heterodimers. The uncleaved protein forms homodimers. Post-translationally, autocleaved. Generates the alpha and beta subunits. The N-terminal residue of the beta subunit is thought to be responsible for the nucleophile hydrolase activity.

The catalysed reaction is L-asparagine + H2O = L-aspartate + NH4(+). Functionally, catalyzes the hydrolysis of L-asparagine into L-aspartate and ammonia. Does not exhibit glutaminase activity. The protein is Plant-type L-asparaginase of Pyrococcus abyssi (strain GE5 / Orsay).